Consider the following 313-residue polypeptide: MEKRLLDFEVGETVDLFLLIKSSVKGTASNGKPFLSLVLQDKSGELEAKLWDVKESDEANYGVQQIVHLMGDIQNYRGRKQLKIRQIRQATALDGVSASEFMETAPINKEEMADEITQYIFEMKNANLQRITRALLKKYQDDFYDYPAAMRHHHEFVSGLSFHVVSMLRLAKSVADLYPSVNRDLLYAGVILHDLGKVIELSGPVSTTYTLEGNLIGHISIVVEEVSKIADELSIDGEEVVVLKHVLLSHHGKGEWGSPKPPLVREAEILHQIDLMDASLNMMDKVLKHTKPGEFSERVFGLDNRSFYNPTFE.

The segment at residues 22-90 is a DNA-binding region (OB); that stretch reads SSVKGTASNG…QLKIRQIRQA (69 aa). Residues 163-279 enclose the HD domain; sequence HVVSMLRLAK…LHQIDLMDAS (117 aa).

It belongs to the YhaM family.

Its function is as follows. Shows a 3'-5' exoribonuclease activity. The chain is 3'-5' exoribonuclease YhaM from Listeria monocytogenes serovar 1/2a (strain ATCC BAA-679 / EGD-e).